A 639-amino-acid polypeptide reads, in one-letter code: MAFSHAPSGWRTALLAGLIATVAWLPAIVAQEKTQADYFIHDLPGAPKPLLKMHAGHIEVDAEHNGNLFFWHYQNRHIADRQRTVLWLNGGPGCSSMDGAMMEIGPYRVREGGKLEYNNGSWDEFANLLFVDQPVGTGFSYVNTDSYLTELDQMAAHMVIFLEKWFALFPEYENDDLYIAGESYAGQHIPYIARAILDRNKKNQAKSPWPLKGLLIGNGWMSPVDQYLSYIPFAYQNGLMRSGTDMAKRVEEQQRICVQKLEAGGMDAVDTRDCEQIMVRILQETKNENADPMNQCLNMYDIRLRDDSSCGMNWPPDLAQVTPYLRRADVVQALHINTDKKTGWQECNGAVSSHFRAKNSKPSVKFLPEVIEQVPVLLFSGDKDFICNHVGTEAMIQNLQWNGGKGFEASPGVQNAKQDWMFEGEAAGTWQEARNLTYVVFYNSSHMVPFDYPRRTRDMLDRFMGVNIEAIGGAPADSLIDGEKGPLTSVGDHPNSTKAEEDKSKELKAAEWKAYTRSGEVALVIAVIVACICGFLLCRSRRAKSAYKGDDSDEGRESLLTGMGLDNFRRKERRQDVEAADFDERELDEVPKKSGKGYGQISSEKGRVPHNDSSFSLGVDSDDDEAGSSDRGRRKEESR.

The first 30 residues, 1–30 (MAFSHAPSGWRTALLAGLIATVAWLPAIVA), serve as a signal peptide directing secretion. Over 31 to 517 (QEKTQADYFI…KAAEWKAYTR (487 aa)) the chain is Lumenal. The N-linked (GlcNAc...) asparagine glycan is linked to N119. Active-site residues include S183 and D384. N435 and N443 each carry an N-linked (GlcNAc...) asparagine glycan. The active site involves H446. The segment at 477–504 (DSLIDGEKGPLTSVGDHPNSTKAEEDKS) is disordered. A glycan (N-linked (GlcNAc...) asparagine) is linked at N495. Residues 518–538 (SGEVALVIAVIVACICGFLLC) traverse the membrane as a helical segment. At 539-639 (RSRRAKSAYK…DRGRRKEESR (101 aa)) the chain is on the cytoplasmic side. The tract at residues 580–639 (ADFDERELDEVPKKSGKGYGQISSEKGRVPHNDSSFSLGVDSDDDEAGSSDRGRRKEESR) is disordered. The segment covering 628–639 (SSDRGRRKEESR) has biased composition (basic and acidic residues).

The protein belongs to the peptidase S10 family.

The protein resides in the golgi apparatus. Its subcellular location is the trans-Golgi network membrane. The catalysed reaction is Preferential release of a C-terminal arginine or lysine residue.. In terms of biological role, protease with a carboxypeptidase B-like function involved in the C-terminal processing of the lysine and arginine residues from protein precursors. Promotes cell fusion and is involved in the programmed cell death. This Pyrenophora tritici-repentis (strain Pt-1C-BFP) (Wheat tan spot fungus) protein is Pheromone-processing carboxypeptidase kex1 (kex1).